Here is a 460-residue protein sequence, read N- to C-terminus: Cysteine--tRNA ligase (460 aa).

Residue cysteine 29 coordinates Zn(2+). A 'HIGH' region motif is present at residues proline 31–asparagine 41. The Zn(2+) site is built by cysteine 227, histidine 252, and glutamate 256. Residues lysine 285–serine 289 carry the 'KMSKS' region motif. Lysine 288 is a binding site for ATP.

It belongs to the class-I aminoacyl-tRNA synthetase family. As to quaternary structure, monomer. Zn(2+) is required as a cofactor.

The protein resides in the cytoplasm. It carries out the reaction tRNA(Cys) + L-cysteine + ATP = L-cysteinyl-tRNA(Cys) + AMP + diphosphate. The polypeptide is Cysteine--tRNA ligase (Bradyrhizobium diazoefficiens (strain JCM 10833 / BCRC 13528 / IAM 13628 / NBRC 14792 / USDA 110)).